Reading from the N-terminus, the 110-residue chain is Putative membrane protein insertion efficiency factor (110 aa).

The protein belongs to the UPF0161 family.

The protein resides in the cell inner membrane. In terms of biological role, could be involved in insertion of integral membrane proteins into the membrane. The polypeptide is Putative membrane protein insertion efficiency factor (Aliarcobacter butzleri (strain RM4018) (Arcobacter butzleri)).